Here is a 172-residue protein sequence, read N- to C-terminus: MGSQVQKSDEITFSDYLGLMTCVYEWADSYDSKDWDRLRKVIAPTLRIDYRSFLDKLWEAMPAEEFVGMVSSKQVLGDPTLRTQHFIGGTRWEKVSEDEVIGYHQLRVPHQRYKDTTMKEVTMKGHAHSANLHWYKKIDGVWKFAGLKPDIRWGEFDFDRIFEDGRETFGDK.

Residues tyrosine 30, tyrosine 50, and phenylalanine 53 each contribute to the substrate site. Active-site residues include histidine 85 and histidine 110. Asparagine 131 lines the substrate pocket.

It belongs to the scytalone dehydratase family. As to quaternary structure, homotrimer. Each subunit contains an active site, located in the central part of the hydrophobic core of the monomer, which functions independently.

Its subcellular location is the endosome. The enzyme catalyses scytalone = 1,3,8-trihydroxynaphthalene + H2O. The protein operates within pigment biosynthesis; melanin biosynthesis. Its activity is regulated as follows. (N-phenoxypropyl)-carboxamides such as carpropamid and derivatives of norephedrine act as inhibitors of scytalone dehydratase activity. Functionally, scytalone dehydratase; part of the gene cluster that mediates the biosynthesis of dihydroxynaphthalene melanin, a bluish-green pigment and a structural component of the conidial wall. Within the pathway, catalyzes the dehydration of scytalone as well as of vermelone. Is also able to dehydrate the alternate substrate 2,3-dihydro-2,5-dihydroxy-4H-benzopyran-4-one (DDBO) to 5-hydroxy-4H-1-benzopyran-4-one (HBO). This Pyricularia oryzae (strain 70-15 / ATCC MYA-4617 / FGSC 8958) (Rice blast fungus) protein is Scytalone dehydratase (SDH1).